A 60-amino-acid chain; its full sequence is MATKTIKVTQTKSSIGRLPKHRASLLGLGLRRINHTVEVEDTPSVRGMINKVYYMVKVED.

This sequence belongs to the universal ribosomal protein uL30 family. As to quaternary structure, part of the 50S ribosomal subunit.

The protein is Large ribosomal subunit protein uL30 of Shewanella woodyi (strain ATCC 51908 / MS32).